The following is a 233-amino-acid chain: Peroxisomal membrane protein 11-5 (233 aa).

At 1 to 92 (MSSLESARAD…PLILLGKSKN (92 aa)) the chain is on the cytoplasmic side. The chain crosses the membrane as a helical span at residues 93–113 (ALLSTFLFLDQIVWAGRTGIY). Residues 114–206 (KNKERAEFLS…LLQLAPKKVT (93 aa)) are Lumenal-facing. The chain crosses the membrane as a helical span at residues 207 to 226 (PRVTGAFGFASSLIACYQLL).

It belongs to the peroxin-11 family. In terms of tissue distribution, expressed in seedlings, roots, shoots, leaf sheaths, flag leaf, panicles, spikelets, and endosperm.

The protein resides in the peroxisome membrane. Involved in peroxisomal proliferation. This is Peroxisomal membrane protein 11-5 (PEX11-5) from Oryza sativa subsp. japonica (Rice).